Consider the following 333-residue polypeptide: Eukaryotic translation initiation factor 2 subunit 2 (333 aa).

Disordered stretches follow at residues 1-120 (MSGD…LDIM) and 139-165 (ILEKDEALEDEDSKKDDGISFSNQTGP). The residue at position 2 (Ser2) is an N-acetylserine. Ser2 bears the Phosphoserine mark. A Phosphoserine; by PKC; in vitro modification is found at Ser13. Residues 13-22 (SKKKKKKKKP) are compositionally biased toward basic residues. Thr36 is modified (phosphothreonine). Residues 40–51 (ETKEVEPEPTED) are compositionally biased toward basic and acidic residues. At Ser67 the chain carries Phosphoserine; by CK2. A compositionally biased stretch (basic and acidic residues) spans 96–105 (EGVKDLKIEN). Residue Lys102 forms a Glycyl lysine isopeptide (Lys-Gly) (interchain with G-Cter in SUMO2) linkage. Acidic residues-rich tracts occupy residues 106–118 (DVQEPAEPEDDLD) and 139–149 (ILEKDEALEDE). Ser158 is modified (phosphoserine). Ser218 carries the phosphoserine; by PKA; in vitro modification. Residues Lys265 and Lys293 each carry the N6-acetyllysine modification. Residues 281 to 305 (CHTCRSPDTILQKDTRLYFLQCETC) form a C4-type zinc finger.

It belongs to the eIF-2-beta/eIF-5 family. As to quaternary structure, eukaryotic translation initiation factor 2 eIF2 is a heterotrimeric complex composed of an alpha (EIF2S1), a beta (EIF2S2) and a gamma (EIF2S3) chain. eIF2 is member of the 43S pre-initiation complex (43S PIC). eIF2 forms a complex with at least CELF1/CUGBP1, CALR, CALR3, EIF2S1, EIF2S2, HSP90B1 and HSPA5. Interacts with BZW2/5MP1. Interacts with EIF5. Post-translationally, the N-terminus is blocked.

The protein localises to the cytoplasm. The protein resides in the cytosol. Functionally, component of the eIF2 complex that functions in the early steps of protein synthesis by forming a ternary complex with GTP and initiator tRNA. This complex binds to a 40S ribosomal subunit, followed by mRNA binding to form the 43S pre-initiation complex (43S PIC). Junction of the 60S ribosomal subunit to form the 80S initiation complex is preceded by hydrolysis of the GTP bound to eIF2 and release of an eIF2-GDP binary complex. In order for eIF2 to recycle and catalyze another round of initiation, the GDP bound to eIF2 must exchange with GTP by way of a reaction catalyzed by eIF2B. This Oryctolagus cuniculus (Rabbit) protein is Eukaryotic translation initiation factor 2 subunit 2 (EIF2S2).